We begin with the raw amino-acid sequence, 515 residues long: Bifunctional purine biosynthesis protein PurH (515 aa).

The 144-residue stretch at 1–144 (MGRKALISVS…KNHKFVTIIV (144 aa)) folds into the MGS-like domain.

Belongs to the PurH family.

It carries out the reaction (6R)-10-formyltetrahydrofolate + 5-amino-1-(5-phospho-beta-D-ribosyl)imidazole-4-carboxamide = 5-formamido-1-(5-phospho-D-ribosyl)imidazole-4-carboxamide + (6S)-5,6,7,8-tetrahydrofolate. It catalyses the reaction IMP + H2O = 5-formamido-1-(5-phospho-D-ribosyl)imidazole-4-carboxamide. Its pathway is purine metabolism; IMP biosynthesis via de novo pathway; 5-formamido-1-(5-phospho-D-ribosyl)imidazole-4-carboxamide from 5-amino-1-(5-phospho-D-ribosyl)imidazole-4-carboxamide (10-formyl THF route): step 1/1. The protein operates within purine metabolism; IMP biosynthesis via de novo pathway; IMP from 5-formamido-1-(5-phospho-D-ribosyl)imidazole-4-carboxamide: step 1/1. The chain is Bifunctional purine biosynthesis protein PurH from Persephonella marina (strain DSM 14350 / EX-H1).